The sequence spans 181 residues: ATP synthase subunit delta (181 aa).

The protein belongs to the ATPase delta chain family. F-type ATPases have 2 components, F(1) - the catalytic core - and F(0) - the membrane proton channel. F(1) has five subunits: alpha(3), beta(3), gamma(1), delta(1), epsilon(1). F(0) has three main subunits: a(1), b(2) and c(10-14). The alpha and beta chains form an alternating ring which encloses part of the gamma chain. F(1) is attached to F(0) by a central stalk formed by the gamma and epsilon chains, while a peripheral stalk is formed by the delta and b chains.

The protein resides in the cell membrane. Functionally, f(1)F(0) ATP synthase produces ATP from ADP in the presence of a proton or sodium gradient. F-type ATPases consist of two structural domains, F(1) containing the extramembraneous catalytic core and F(0) containing the membrane proton channel, linked together by a central stalk and a peripheral stalk. During catalysis, ATP synthesis in the catalytic domain of F(1) is coupled via a rotary mechanism of the central stalk subunits to proton translocation. Its function is as follows. This protein is part of the stalk that links CF(0) to CF(1). It either transmits conformational changes from CF(0) to CF(1) or is implicated in proton conduction. The sequence is that of ATP synthase subunit delta from Mycoplasma mycoides subsp. mycoides SC (strain CCUG 32753 / NCTC 10114 / PG1).